The sequence spans 135 residues: Ribosome-binding factor A (135 aa).

Belongs to the RbfA family. Monomer. Binds 30S ribosomal subunits, but not 50S ribosomal subunits or 70S ribosomes.

It is found in the cytoplasm. In terms of biological role, one of several proteins that assist in the late maturation steps of the functional core of the 30S ribosomal subunit. Associates with free 30S ribosomal subunits (but not with 30S subunits that are part of 70S ribosomes or polysomes). Required for efficient processing of 16S rRNA. May interact with the 5'-terminal helix region of 16S rRNA. The sequence is that of Ribosome-binding factor A from Bartonella tribocorum (strain CIP 105476 / IBS 506).